Here is a 414-residue protein sequence, read N- to C-terminus: Secernin-1 (414 aa).

A2 carries the post-translational modification N-acetylalanine. C9 is an active-site residue.

It belongs to the peptidase C69 family. Secernin subfamily.

It localises to the cytoplasm. Its function is as follows. Regulates exocytosis in mast cells. Increases both the extent of secretion and the sensitivity of mast cells to stimulation with calcium. This Bos taurus (Bovine) protein is Secernin-1 (SCRN1).